The following is a 370-amino-acid chain: Chaperone protein DnaJ (370 aa).

A J domain is found at 6-70 (DYYEVLGVQR…EKRSMYDRFG (65 aa)). Residues 128–208 (GVEKTIEFRR…CRGEGRVRQT (81 aa)) form a CR-type zinc finger. Residues Cys141, Cys144, Cys158, Cys161, Cys182, Cys185, Cys196, and Cys199 each coordinate Zn(2+). CXXCXGXG motif repeat units lie at residues 141–148 (CPACRGSG), 158–165 (CPKCGGLG), 182–189 (CDMCRGEG), and 196–203 (CRECRGEG).

Belongs to the DnaJ family. In terms of assembly, homodimer. Zn(2+) serves as cofactor.

It localises to the cytoplasm. Functionally, participates actively in the response to hyperosmotic and heat shock by preventing the aggregation of stress-denatured proteins and by disaggregating proteins, also in an autonomous, DnaK-independent fashion. Unfolded proteins bind initially to DnaJ; upon interaction with the DnaJ-bound protein, DnaK hydrolyzes its bound ATP, resulting in the formation of a stable complex. GrpE releases ADP from DnaK; ATP binding to DnaK triggers the release of the substrate protein, thus completing the reaction cycle. Several rounds of ATP-dependent interactions between DnaJ, DnaK and GrpE are required for fully efficient folding. Also involved, together with DnaK and GrpE, in the DNA replication of plasmids through activation of initiation proteins. The polypeptide is Chaperone protein DnaJ (Roseiflexus sp. (strain RS-1)).